Here is a 332-residue protein sequence, read N- to C-terminus: Cell growth regulator with RING finger domain protein 1 (332 aa).

The RING-type zinc-finger motif lies at 274–309 (CVVCQNGGVNWVLLPCRHACLCDSCVRYFKQCPMCR).

Its subcellular location is the nucleus. It is found in the endoplasmic reticulum. Functionally, able to inhibit growth in several cell lines. In Mus musculus (Mouse), this protein is Cell growth regulator with RING finger domain protein 1 (Cgrrf1).